The primary structure comprises 978 residues: Probable serine/threonine-protein kinase PLK (978 aa).

Positions 19–36 are enriched in low complexity; it reads IQIQQQQFKQPQQQPQQK. Disordered regions lie at residues 19-66 and 121-143; these read IQIQ…SSIH and QQQQ…NEPQ. Over residues 37-53 the composition is skewed to polar residues; the sequence is SNSCFSDQENYPANIQP. The span at 54-64 shows a compositional bias: low complexity; that stretch reads SSSTSSSSSSS. The Protein kinase domain occupies 163–416; the sequence is YRQGEFLGKG…LTQILEHDFF (254 aa). ATP is bound by residues 169 to 177 and Lys-192; that span reads LGKGGFAKC. Asp-286 (proton acceptor) is an active-site residue. Disordered stretches follow at residues 463–554 and 601–638; these read GTTS…FANL and ENQQ…TVTT. Low complexity-rich tracts occupy residues 473–492 and 500–549; these read HHYQ…NYQQ and INNM…NINN. 2 coiled-coil regions span residues 497 to 555 and 592 to 630; these read KKQI…ANLS and IKQQ…INNN. Residues 696–780 enclose the POLO box 1 domain; the sequence is YISQYADFTN…IKYFLNHFTN (85 aa). The tract at residues 798-819 is disordered; that stretch reads NNNNNNNVENVTNNNNNNSNNS. A POLO box 2 domain is found at 826–904; the sequence is YVKKWIKFDN…IYGTLSNNLY (79 aa). Residues 908-978 are disordered; sequence PESSFQQLPQ…SIPQPQLINQ (71 aa). Over residues 913 to 978 the composition is skewed to low complexity; the sequence is QQLPQQQYQQ…SIPQPQLINQ (66 aa).

It belongs to the protein kinase superfamily. Ser/Thr protein kinase family. CDC5/Polo subfamily.

It catalyses the reaction L-seryl-[protein] + ATP = O-phospho-L-seryl-[protein] + ADP + H(+). The catalysed reaction is L-threonyl-[protein] + ATP = O-phospho-L-threonyl-[protein] + ADP + H(+). The sequence is that of Probable serine/threonine-protein kinase PLK (PLK) from Dictyostelium discoideum (Social amoeba).